Reading from the N-terminus, the 303-residue chain is tRNA pseudouridine synthase B (303 aa).

Aspartate 47 functions as the Nucleophile in the catalytic mechanism.

Belongs to the pseudouridine synthase TruB family. Type 1 subfamily.

It catalyses the reaction uridine(55) in tRNA = pseudouridine(55) in tRNA. Its function is as follows. Responsible for synthesis of pseudouridine from uracil-55 in the psi GC loop of transfer RNAs. This chain is tRNA pseudouridine synthase B, found in Legionella pneumophila (strain Lens).